The following is a 698-amino-acid chain: MAAADALANVRNIGIMAHIDAGKTTTTERILFYTGITYKIGEVHEGAAVMDWMAQEQERGITITSAATKCEWKGHTIQIIDTPGHVDFTVEVERSLRVLDGAVAVYDGVAGVEPQTENVWRQADKYNVPRMCFVNKLDRTGADFFRCVQMMVDRLNATPLVLQVPIGLESEHIGVVDLIGMRALTWRGETQKGEDYAVEEIPAELADVATEWREKLMETLADVDDAVMEKYLEGEEFSVEEIKAAIRRATIAGKANPVLCGSAFKNKGVQPMLDAVVDYLPSPLDVPAIEGTATDGETPMLRKPSTSEPFAGLAFKIQTDKHLGKLTYVRVYSGVVETGSQVVNSTKDRKERIGKIYQMHANKREERGSAKAGDIIAVQGLKQTTTGDTLCDPANPVILESMTFPEPVIEVAIEPKTKADQEKLSTAIQRLAEEDPTFRVKLDEETGQTVISGMGELHLDILVDRMRREFNVEANIGMPQVAYRETIRRKVEKVEYTHKKQTGGSGQYARVIISLEPLPLDNEAPTYEFANAVTGGRIPREFIPSVDAGAQDAMQYGILAGFPLVGVKLTLVDGQYHEVDSSEMAFKIAGSMVLKDAARKADPALLEPMMAVEVTTPEENMGDVIGDINSRRGIIQAMEERGGARVVRSLVPLSEMFGYVGDLRSKTQGRASFSMQFDSYAEVPASVAREIIAKATGE.

The 277-residue stretch at 8-284 folds into the tr-type G domain; the sequence is ANVRNIGIMA…AVVDYLPSPL (277 aa). Residues 17–24, 81–85, and 135–138 each bind GTP; these read AHIDAGKT, DTPGH, and NKLD.

Belongs to the TRAFAC class translation factor GTPase superfamily. Classic translation factor GTPase family. EF-G/EF-2 subfamily.

It localises to the cytoplasm. Catalyzes the GTP-dependent ribosomal translocation step during translation elongation. During this step, the ribosome changes from the pre-translocational (PRE) to the post-translocational (POST) state as the newly formed A-site-bound peptidyl-tRNA and P-site-bound deacylated tRNA move to the P and E sites, respectively. Catalyzes the coordinated movement of the two tRNA molecules, the mRNA and conformational changes in the ribosome. The protein is Elongation factor G of Salinispora tropica (strain ATCC BAA-916 / DSM 44818 / JCM 13857 / NBRC 105044 / CNB-440).